The chain runs to 270 residues: Gap junction beta-3 protein (270 aa).

The Cytoplasmic segment spans residues 1 to 20 (MDWKKLQDLLSGVNQYSTAF). The chain crosses the membrane as a helical span at residues 21–40 (GRIWLSVVFVFRVLVYVVAA). The Extracellular segment spans residues 41 to 75 (ERVWGDEQKDFDCNTRQPGCTNVCYDNFFPISNIR). The chain crosses the membrane as a helical span at residues 76-98 (LWALQLIFVTCPSMLVILHVAYR). Over 99-126 (EERERKHRQKHGEHCAKLYSHPGKKHGG) the chain is Cytoplasmic. A helical transmembrane segment spans residues 127 to 149 (LWWTYLFSLIFKLIIELVFLYVL). The Extracellular segment spans residues 150 to 188 (HTLWHGFTMPRLVQCASVVPCPNTVDCYIARPTEKKVFT). Residues 189 to 211 (YFMVGASAVCIILTICEICYLIF) form a helical membrane-spanning segment. At 212 to 270 (HRIMRGLSKDKSTKSISSPKSSSRASTCRCHHKLLESGDLEAVPADDKLQASAPSLTPI) the chain is on the cytoplasmic side.

This sequence belongs to the connexin family. Beta-type (group I) subfamily. In terms of assembly, a connexon is composed of a hexamer of connexins. Interacts with CNST.

It localises to the cell membrane. It is found in the cell junction. Its subcellular location is the gap junction. Functionally, one gap junction consists of a cluster of closely packed pairs of transmembrane channels, the connexons, through which materials of low MW diffuse from one cell to a neighboring cell. The sequence is that of Gap junction beta-3 protein (Gjb3) from Rattus norvegicus (Rat).